A 287-amino-acid chain; its full sequence is Protoheme IX farnesyltransferase (287 aa).

The next 7 helical transmembrane spans lie at 19 to 39, 100 to 120, 134 to 154, 162 to 182, 212 to 232, 233 to 253, and 267 to 287; these read LMVA…VTIT, MVLC…IVAV, FALL…WLAV, MLVV…WLHA, VWFH…LLEG, VGMR…AMLA, and VLCA…VSLF.

Belongs to the UbiA prenyltransferase family. Protoheme IX farnesyltransferase subfamily.

The protein localises to the cell inner membrane. It catalyses the reaction heme b + (2E,6E)-farnesyl diphosphate + H2O = Fe(II)-heme o + diphosphate. Its pathway is porphyrin-containing compound metabolism; heme O biosynthesis; heme O from protoheme: step 1/1. In terms of biological role, converts heme B (protoheme IX) to heme O by substitution of the vinyl group on carbon 2 of heme B porphyrin ring with a hydroxyethyl farnesyl side group. This chain is Protoheme IX farnesyltransferase, found in Nitratidesulfovibrio vulgaris (strain DP4) (Desulfovibrio vulgaris).